The sequence spans 327 residues: MSQYVVCALYKFVELNHYQELRAPLLALMEENHIRGTLLLAQEGINGTVASSRQGIDALLAWLENEPSLKGTVYKESSASEPPFNRTKVKLKKEIVTMGVEGIDPRHVVGTYVKPQDWNALISDPEVLVVDTRNDYEVQLGTFKNALNPKTETFREFPHYVQENLDPQKHKKVAMFCTGGIRCEKSTAYLKEQGFEEVYHLEGGILKYLEEVPQEQSLWEGDCYVFDGRVAVGHGLAESDYQICNACRLPITEEDKQSEQYEQGVSCPRCFGTHSEEQLERFREREKQVQLAKLRGESHIGEESAALIEKRRAEKLARKAAQRGQKG.

Residues 123–217 (SDPEVLVVDT…YLEEVPQEQS (95 aa)) enclose the Rhodanese domain. The Cysteine persulfide intermediate role is filled by Cys-177.

The protein belongs to the TrhO family.

The enzyme catalyses uridine(34) in tRNA + AH2 + O2 = 5-hydroxyuridine(34) in tRNA + A + H2O. Catalyzes oxygen-dependent 5-hydroxyuridine (ho5U) modification at position 34 in tRNAs. The chain is tRNA uridine(34) hydroxylase from Vibrio cholerae serotype O1 (strain ATCC 39315 / El Tor Inaba N16961).